Here is a 238-residue protein sequence, read N- to C-terminus: Ribonuclease PH (238 aa).

Phosphate is bound by residues Arg-86 and 124 to 126 (GTR).

It belongs to the RNase PH family. Homohexameric ring arranged as a trimer of dimers.

The catalysed reaction is tRNA(n+1) + phosphate = tRNA(n) + a ribonucleoside 5'-diphosphate. Functionally, phosphorolytic 3'-5' exoribonuclease that plays an important role in tRNA 3'-end maturation. Removes nucleotide residues following the 3'-CCA terminus of tRNAs; can also add nucleotides to the ends of RNA molecules by using nucleoside diphosphates as substrates, but this may not be physiologically important. Probably plays a role in initiation of 16S rRNA degradation (leading to ribosome degradation) during starvation. This chain is Ribonuclease PH, found in Haemophilus influenzae (strain PittEE).